The following is a 340-amino-acid chain: N-acetyl-gamma-glutamyl-phosphate reductase (340 aa).

The active site involves cysteine 147.

Belongs to the NAGSA dehydrogenase family. Type 1 subfamily.

Its subcellular location is the cytoplasm. The catalysed reaction is N-acetyl-L-glutamate 5-semialdehyde + phosphate + NADP(+) = N-acetyl-L-glutamyl 5-phosphate + NADPH + H(+). Its pathway is amino-acid biosynthesis; L-arginine biosynthesis; N(2)-acetyl-L-ornithine from L-glutamate: step 3/4. Catalyzes the NADPH-dependent reduction of N-acetyl-5-glutamyl phosphate to yield N-acetyl-L-glutamate 5-semialdehyde. This is N-acetyl-gamma-glutamyl-phosphate reductase from Lactococcus lactis subsp. lactis (strain IL1403) (Streptococcus lactis).